We begin with the raw amino-acid sequence, 156 residues long: Ribosomal RNA large subunit methyltransferase H (156 aa).

S-adenosyl-L-methionine is bound by residues Leu-73, Gly-104, and 123–128 (LSPLTM).

Belongs to the RNA methyltransferase RlmH family. As to quaternary structure, homodimer.

It is found in the cytoplasm. The enzyme catalyses pseudouridine(1915) in 23S rRNA + S-adenosyl-L-methionine = N(3)-methylpseudouridine(1915) in 23S rRNA + S-adenosyl-L-homocysteine + H(+). Its function is as follows. Specifically methylates the pseudouridine at position 1915 (m3Psi1915) in 23S rRNA. This chain is Ribosomal RNA large subunit methyltransferase H, found in Proteus mirabilis (strain HI4320).